The chain runs to 455 residues: Probable Xaa-Pro aminopeptidase GSTUM_00008071001 (455 aa).

The Mn(2+) site is built by Asp-251, Asp-262, Glu-386, and Glu-426.

This sequence belongs to the peptidase M24B family. It depends on Mn(2+) as a cofactor.

The enzyme catalyses Release of any N-terminal amino acid, including proline, that is linked to proline, even from a dipeptide or tripeptide.. In terms of biological role, catalyzes the removal of a penultimate prolyl residue from the N-termini of peptides. The protein is Probable Xaa-Pro aminopeptidase GSTUM_00008071001 of Tuber melanosporum (strain Mel28) (Perigord black truffle).